We begin with the raw amino-acid sequence, 181 residues long: uncharacterized protein (181 aa).

This is an uncharacterized protein from Acidianus filamentous virus 2 (isolate Italy/Pozzuoli) (AFV-2).